The following is a 496-amino-acid chain: MDDKQHTTSSDDERAENATSNQDQQTNSSKRVHLKRWQFISILIGTIIITAVITVVAYIFINQKISGLNKTDQANLNKIENVYKILNSDYYKKQNSDKLSKAAIDGMVKELKDPYSEYLTKEQTKSFNEGVSGDFVGIGAEMQKKNDQIMVTSPMKGSPAERAGIRPKDVITKVNGKSIKGKALDEVVKDVRGKENTEVTLTVQRGSEEKDVKIKREKIHVKSVEYKKKGKVGVITINKFQNDTSGELKDAVLKAHKDGLKKIVLDLRNNPGGLLDEAVKMANIFIDKGKTVVKLEKGKDTEAIQTSNDALKEAKDMDISILVNEGSASASEVFTGALKDYNKAKVYGSKTFGKGVVQTTREFKDGSLLKYTEMKWLTPDGHYIHGKGIKPDVTIDTPKYQSLNVIPNTKTFKVGDDDKNIKTIKIGLSALGYKVDNESTQFDQALENLVKAFQQANKLEVTGEFNKETNNKFTELLVEKANKHDDVLDKLINILK.

Over residues 1-16 (MDDKQHTTSSDDERAE) the composition is skewed to basic and acidic residues. Residues 1–27 (MDDKQHTTSSDDERAENATSNQDQQTN) are disordered. The span at 17–27 (NATSNQDQQTN) shows a compositional bias: polar residues. The helical transmembrane segment at 39 to 59 (FISILIGTIIITAVITVVAYI) threads the bilayer. In terms of domain architecture, PDZ spans 124–206 (TKSFNEGVSG…TEVTLTVQRG (83 aa)). Residues Ser-329, Asp-340, and Lys-354 each act as charge relay system in the active site.

This sequence belongs to the peptidase S41A family.

Its subcellular location is the cell membrane. In Staphylococcus aureus (strain MRSA252), this protein is Probable CtpA-like serine protease.